The primary structure comprises 412 residues: NAD-dependent dihydropyrimidine dehydrogenase subunit PreT (412 aa).

An NAD(+)-binding site is contributed by E286.

This sequence belongs to the NADH dehydrogenase family. In terms of assembly, heterotetramer of 2 PreA and 2 PreT subunits.

The catalysed reaction is 5,6-dihydrouracil + NAD(+) = uracil + NADH + H(+). It carries out the reaction 5,6-dihydrothymine + NAD(+) = thymine + NADH + H(+). In terms of biological role, involved in pyrimidine base degradation. Catalyzes physiologically the reduction of uracil to 5,6-dihydrouracil (DHU) by using NADH as a specific cosubstrate. It also catalyzes the reverse reaction and the reduction of thymine to 5,6-dihydrothymine (DHT). The chain is NAD-dependent dihydropyrimidine dehydrogenase subunit PreT (preT) from Escherichia coli O157:H7.